Here is a 143-residue protein sequence, read N- to C-terminus: Large ribosomal subunit protein uL22c (143 aa).

This sequence belongs to the universal ribosomal protein uL22 family. As to quaternary structure, part of the 50S ribosomal subunit.

Its subcellular location is the plastid. The protein localises to the chloroplast. Its function is as follows. This protein binds specifically to 23S rRNA. The globular domain of the protein is located near the polypeptide exit tunnel on the outside of the subunit, while an extended beta-hairpin is found that lines the wall of the exit tunnel in the center of the 70S ribosome. The polypeptide is Large ribosomal subunit protein uL22c (rpl22) (Piper cenocladum (Ant piper)).